Reading from the N-terminus, the 1403-residue chain is Protein FAM135B (1403 aa).

4 disordered regions span residues 445-483 (EKNLINQNSSSRKDIPLSTTEAPQLGSDEDVTRRPEVQE), 514-548 (EDECWTGPRPDAVKDSLTDTDICSRSPGPDEGQTP), 648-669 (REALDTKPSQPDHAEEPEDLSA), and 718-740 (RHAHHRNSLEGGHTESNTSLPSG). Residues 649 to 661 (EALDTKPSQPDHA) show a composition bias toward basic and acidic residues. A compositionally biased stretch (polar residues) spans 731-740 (TESNTSLPSG). Residues serine 775 and serine 776 each carry the phosphoserine modification. Residues 790 to 819 (TAGFSEDLDPSSKENSPPRHTSLSYGGSRV) are disordered. A compositionally biased stretch (polar residues) spans 802–814 (KENSPPRHTSLSY).

The protein belongs to the FAM135 family.

This Mus musculus (Mouse) protein is Protein FAM135B (Fam135b).